We begin with the raw amino-acid sequence, 1412 residues long: Probable phosphatidylinositol 4-kinase STT4 homolog (1412 aa).

The PIK helical domain occupies 878 to 1055; that stretch reads SMETNGFYRF…GTFVRCIEEI (178 aa). Residues 1056-1163 form a pleckstrin homology (PH) domain conferring phosphoinositide binding specificity region; sequence MKEMPDGSRD…ISIKQLIFKS (108 aa). The PI3K/PI4K catalytic domain maps to 1127–1396; it reads NGSARALQSH…LIAESSQKFR (270 aa). Positions 1133–1139 are G-loop; sequence LQSHSKV. The tract at residues 1266–1274 is catalytic loop; the sequence is NIKDRHNGN. The interval 1285-1308 is activation loop; it reads HIDFGYMLEMSPGNLNIEAPLKLT.

It belongs to the PI3/PI4-kinase family. Type III PI4K subfamily.

The protein localises to the cytoplasm. The catalysed reaction is a 1,2-diacyl-sn-glycero-3-phospho-(1D-myo-inositol) + ATP = a 1,2-diacyl-sn-glycero-3-phospho-(1D-myo-inositol 4-phosphate) + ADP + H(+). Acts on phosphatidylinositol (PI) in the first committed step in the production of the second messenger inositol 1,4,5,-trisphosphate. This chain is Probable phosphatidylinositol 4-kinase STT4 homolog (STT4), found in Encephalitozoon cuniculi (strain GB-M1) (Microsporidian parasite).